Reading from the N-terminus, the 479-residue chain is ATP synthase subunit beta (479 aa).

168 to 175 is an ATP binding site; it reads GGAGVGKT.

This sequence belongs to the ATPase alpha/beta chains family. As to quaternary structure, F-type ATPases have 2 components, CF(1) - the catalytic core - and CF(0) - the membrane proton channel. CF(1) has five subunits: alpha(3), beta(3), gamma(1), delta(1), epsilon(1). CF(0) has three main subunits: a(1), b(2) and c(9-12). The alpha and beta chains form an alternating ring which encloses part of the gamma chain. CF(1) is attached to CF(0) by a central stalk formed by the gamma and epsilon chains, while a peripheral stalk is formed by the delta and b chains.

The protein resides in the cell membrane. The catalysed reaction is ATP + H2O + 4 H(+)(in) = ADP + phosphate + 5 H(+)(out). Produces ATP from ADP in the presence of a proton gradient across the membrane. The catalytic sites are hosted primarily by the beta subunits. This Parafrankia sp. (strain EAN1pec) protein is ATP synthase subunit beta.